Reading from the N-terminus, the 257-residue chain is Imidazole glycerol phosphate synthase subunit HisF (257 aa).

Residues aspartate 11 and aspartate 130 contribute to the active site.

This sequence belongs to the HisA/HisF family. In terms of assembly, heterodimer of HisH and HisF.

It localises to the cytoplasm. It carries out the reaction 5-[(5-phospho-1-deoxy-D-ribulos-1-ylimino)methylamino]-1-(5-phospho-beta-D-ribosyl)imidazole-4-carboxamide + L-glutamine = D-erythro-1-(imidazol-4-yl)glycerol 3-phosphate + 5-amino-1-(5-phospho-beta-D-ribosyl)imidazole-4-carboxamide + L-glutamate + H(+). It functions in the pathway amino-acid biosynthesis; L-histidine biosynthesis; L-histidine from 5-phospho-alpha-D-ribose 1-diphosphate: step 5/9. Its function is as follows. IGPS catalyzes the conversion of PRFAR and glutamine to IGP, AICAR and glutamate. The HisF subunit catalyzes the cyclization activity that produces IGP and AICAR from PRFAR using the ammonia provided by the HisH subunit. This Pseudoalteromonas atlantica (strain T6c / ATCC BAA-1087) protein is Imidazole glycerol phosphate synthase subunit HisF.